We begin with the raw amino-acid sequence, 521 residues long: Acetylcholine receptor subunit beta-like 1 (521 aa).

The first 24 residues, 1–24 (MESSCKSWLLCSILVLVAFSLVSA), serve as a signal peptide directing secretion. Topologically, residues 25–235 (SEDEERLVRD…ITFYIIIRRK (211 aa)) are extracellular. N-linked (GlcNAc...) asparagine glycosylation is present at asparagine 48. Cysteines 152 and 166 form a disulfide. 3 consecutive transmembrane segments (helical) span residues 236–260 (TLFYTVNLILPTVLISFLCVLVFYL), 268–286 (VTLGISILLSLVVFLLLVS), and 302–323 (YLLFTFIMNTVSILVTVIIINW). The Cytoplasmic portion of the chain corresponds to 324–481 (NFRGPRTHRM…WKYVAMVIDR (158 aa)). Residues 482-500 (LQLYIFFIVTTAGTVGILM) form a helical membrane-spanning segment.

Belongs to the ligand-gated ion channel (TC 1.A.9) family. Acetylcholine receptor (TC 1.A.9.1) subfamily. As to expression, CNS in embryos.

It is found in the postsynaptic cell membrane. It localises to the cell membrane. Its function is as follows. After binding acetylcholine, the AChR responds by an extensive change in conformation that affects all subunits and leads to opening of an ion-conducting channel across the plasma membrane. This chain is Acetylcholine receptor subunit beta-like 1 (nAChRbeta1), found in Drosophila melanogaster (Fruit fly).